Reading from the N-terminus, the 100-residue chain is Large ribosomal subunit protein uL23 (100 aa).

This sequence belongs to the universal ribosomal protein uL23 family. As to quaternary structure, part of the 50S ribosomal subunit. Contacts protein L29, and trigger factor when it is bound to the ribosome.

One of the early assembly proteins it binds 23S rRNA. One of the proteins that surrounds the polypeptide exit tunnel on the outside of the ribosome. Forms the main docking site for trigger factor binding to the ribosome. This Edwardsiella ictaluri (strain 93-146) protein is Large ribosomal subunit protein uL23.